The primary structure comprises 94 residues: MKWGALLCIFGFLAFCSVLDRGLGWIPDIWQKCSSKNEEFQQCGSSCPETCANHKNPEPKSCAAVCFVGCVCKPGFIRDDLKGSICVKPEDCSK.

The first 24 residues, methionine 1 to glycine 24, serve as a signal peptide directing secretion. The propeptide occupies tryptophan 25–tryptophan 30. Cystine bridges form between cysteine 33-cysteine 70, cysteine 43-cysteine 66, cysteine 47-cysteine 62, cysteine 51-cysteine 92, and cysteine 72-cysteine 86. Positions cysteine 33 to cysteine 92 constitute a TIL domain. A protease binding loop region spans residues alanine 63–valine 65.

Belongs to the serine protease inhibitor-like (TIL domain-containing) family. As to expression, expressed by the venom gland.

Its subcellular location is the secreted. Functionally, recombinant protein inhibits both alpha-chymotrypsin (Ki=97.1 nM) and elastase (Ki=3700 nM). The protein is Venom peptide SjAPI of Scorpiops jendeki (Scorpion).